The following is a 94-amino-acid chain: Putative pterin-4-alpha-carbinolamine dehydratase (94 aa).

This sequence belongs to the pterin-4-alpha-carbinolamine dehydratase family.

The enzyme catalyses (4aS,6R)-4a-hydroxy-L-erythro-5,6,7,8-tetrahydrobiopterin = (6R)-L-erythro-6,7-dihydrobiopterin + H2O. In Mycolicibacterium smegmatis (strain ATCC 700084 / mc(2)155) (Mycobacterium smegmatis), this protein is Putative pterin-4-alpha-carbinolamine dehydratase.